We begin with the raw amino-acid sequence, 433 residues long: Histidinol dehydrogenase homolog (433 aa).

2 residues coordinate Zn(2+): Q249 and H252. Active-site proton acceptor residues include E319 and H320. 2 residues coordinate Zn(2+): D353 and H412.

Belongs to the histidinol dehydrogenase family. Zn(2+) serves as cofactor.

The polypeptide is Histidinol dehydrogenase homolog (Ruegeria pomeroyi (strain ATCC 700808 / DSM 15171 / DSS-3) (Silicibacter pomeroyi)).